The sequence spans 1929 residues: Intraflagellar transport protein 140 (1929 aa).

WD repeat units follow at residues 76-116 (QVQV…PSYK) and 119-158 (LHQEELCLIKWLSHGRILVTCDVSGQVILYKFSTDTYSFE). The tract at residues 774–795 (LSTPDTGSPAVEAEESPQRQTR) is disordered. LRR repeat units follow at residues 957 to 980 (STSLNLLFVGSSMLFALKTGTFTK), 1019 to 1044 (ISLLQSIYISSEQRAKVPLLVQSLAE), and 1510 to 1532 (AQSLELCIKSNRMKELSNLLADI).

Its subcellular location is the cell projection. The protein localises to the cilium. The protein resides in the flagellum. It is found in the cytoplasm. It localises to the cytoskeleton. Its subcellular location is the flagellum axoneme. The protein localises to the flagellum basal body. Functionally, component of the intraflagellar transport complex A (IFT-A) involved in flagellar assembly. The protein is Intraflagellar transport protein 140 of Giardia intestinalis (strain ATCC 50803 / WB clone C6) (Giardia lamblia).